We begin with the raw amino-acid sequence, 25 residues long: Androctonin (25 aa).

Intrachain disulfides connect cysteine 4/cysteine 20 and cysteine 10/cysteine 16.

The protein localises to the secreted. Active against both bacteria (Gram-positive and Gram-negative) and filamentous fungi. Acts on the membrane of the bacterial cells. It destabilize a membrane by modifying its properties. The sequence is that of Androctonin from Androctonus australis (Sahara scorpion).